A 590-amino-acid polypeptide reads, in one-letter code: Synaptotagmin-3 (590 aa).

The Vesicular portion of the chain corresponds to 1–54 (MSGDYEDDLCRRALILVSDLCARVRDADTNDRCQEFNDRIRGYPRGPDADISVS). Residues 10–34 (CRRALILVSDLCARVRDADTNDRCQ) are cysteine motif. The helical transmembrane segment at 55–75 (LLSVIVTFCGIVLLGVSLFVS) threads the bilayer. Residues 76–590 (WKLCWVPWRD…KGLSEKENSE (515 aa)) lie on the Cytoplasmic side of the membrane. Disordered regions lie at residues 143–220 (AELL…VTSL), 234–260 (TQQTLTSQPDPSSEERPPALPLPLPGG), and 273–295 (ELYQGTGPGGRRSGGGPGSGEAG). Residues 185 to 203 (SPELPSEGGAGSGLLLLPP) show a composition bias toward low complexity. The span at 234–243 (TQQTLTSQPD) shows a compositional bias: polar residues. Positions 278 to 295 (TGPGGRRSGGGPGSGEAG) are enriched in gly residues. At R284 the chain carries Omega-N-methylarginine. 2 consecutive C2 domains span residues 299–420 (PCGR…PLWR) and 431–565 (DLGE…EHWH). Residues D330, D336, D388, F389, D390, S393, D396, D462, D468, D522, and D524 each contribute to the Ca(2+) site.

This sequence belongs to the synaptotagmin family. As to quaternary structure, homodimer; disulfide-linked via the cysteine motif. Can also form heterodimers with SYT6, SYT9 and SYT10. Requires Ca(2+) as cofactor. In terms of tissue distribution, expressed in melanocytes.

It localises to the cell membrane. The protein localises to the cytoplasmic vesicle. Its subcellular location is the secretory vesicle membrane. In terms of biological role, ca(2+) sensor involved in Ca(2+)-dependent exocytosis of secretory vesicles through Ca(2+) and phospholipid binding to the C2 domain. Ca(2+) induces binding of the C2-domains to phospholipid membranes and to assembled SNARE-complexes; both actions contribute to triggering exocytosis. Plays a role in dendrite formation by melanocytes. The sequence is that of Synaptotagmin-3 (SYT3) from Homo sapiens (Human).